A 243-amino-acid polypeptide reads, in one-letter code: NEDD4-binding protein 2-like 1 (243 aa).

Positions 1 to 38 (MEDSFLQSFGRLSLQPQQQQQRQRPPRPPPRGTPPRRH) are disordered.

As to quaternary structure, interacts with dynactin subunit proteins, including DCTN4, DCTN5 and DCTN5.

In terms of biological role, might play a role in adipocyte differentiation and triglyceride accumulation. The sequence is that of NEDD4-binding protein 2-like 1 (N4BP2L1) from Homo sapiens (Human).